The primary structure comprises 306 residues: D-alanine--D-alanine ligase (306 aa).

The ATP-grasp domain occupies 101-303 (KQVWQGIGLT…FSQLVVKILE (203 aa)). Position 134 to 189 (134 to 189 (VADLGLPLIVKPSLEGSSVGMTKVNEISELRGALEAAFRYDVDLLVEKWLHGPEYT)) interacts with ATP. Mg(2+) contacts are provided by D257, E270, and N272.

It belongs to the D-alanine--D-alanine ligase family. Requires Mg(2+) as cofactor. It depends on Mn(2+) as a cofactor.

The protein localises to the cytoplasm. It carries out the reaction 2 D-alanine + ATP = D-alanyl-D-alanine + ADP + phosphate + H(+). It participates in cell wall biogenesis; peptidoglycan biosynthesis. In terms of biological role, cell wall formation. The protein is D-alanine--D-alanine ligase of Photorhabdus laumondii subsp. laumondii (strain DSM 15139 / CIP 105565 / TT01) (Photorhabdus luminescens subsp. laumondii).